The sequence spans 298 residues: Protease HtpX (298 aa).

The next 2 helical transmembrane spans lie at 4 to 24 (IALY…TLSL) and 41 to 61 (TSLL…SLLI). His-147 contributes to the Zn(2+) binding site. Glu-148 is a catalytic residue. His-151 is a binding site for Zn(2+). The next 2 membrane-spanning stretches (helical) occupy residues 162-182 (LIQG…GYVI) and 193-213 (GLGF…GIAA). Glu-225 is a binding site for Zn(2+).

It belongs to the peptidase M48B family. Zn(2+) serves as cofactor.

It is found in the cell inner membrane. This Alcanivorax borkumensis (strain ATCC 700651 / DSM 11573 / NCIMB 13689 / SK2) protein is Protease HtpX.